A 310-amino-acid polypeptide reads, in one-letter code: tRNA-cytidine(32) 2-sulfurtransferase (310 aa).

A PP-loop motif motif is present at residues 45-50 (SGGKDS). 3 residues coordinate [4Fe-4S] cluster: Cys120, Cys123, and Cys211.

It belongs to the TtcA family. Homodimer. Requires Mg(2+) as cofactor. It depends on [4Fe-4S] cluster as a cofactor.

It is found in the cytoplasm. It catalyses the reaction cytidine(32) in tRNA + S-sulfanyl-L-cysteinyl-[cysteine desulfurase] + AH2 + ATP = 2-thiocytidine(32) in tRNA + L-cysteinyl-[cysteine desulfurase] + A + AMP + diphosphate + H(+). The protein operates within tRNA modification. Its function is as follows. Catalyzes the ATP-dependent 2-thiolation of cytidine in position 32 of tRNA, to form 2-thiocytidine (s(2)C32). The sulfur atoms are provided by the cysteine/cysteine desulfurase (IscS) system. This chain is tRNA-cytidine(32) 2-sulfurtransferase, found in Shewanella putrefaciens (strain CN-32 / ATCC BAA-453).